Here is a 75-residue protein sequence, read N- to C-terminus: Iota-conotoxin-like R11.3 (75 aa).

The signal sequence occupies residues 1–19 (MKLCLTFLLVLMILASVTG). Residues 20–34 (EKLSEQTLRRAARKN) constitute a propeptide that is removed on maturation. Cystine bridges form between Cys-39-Cys-53, Cys-46-Cys-58, Cys-52-Cys-63, and Cys-57-Cys-70.

This sequence belongs to the conotoxin I1 superfamily. In terms of tissue distribution, expressed by the venom duct.

It is found in the secreted. In terms of biological role, iota-conotoxins bind to voltage-gated sodium channels (Nav) and act as agonists by shifting the voltage-dependence of activation to more hyperpolarized levels. Produces general excitatory symptoms. This Conus radiatus (Rayed cone) protein is Iota-conotoxin-like R11.3.